The sequence spans 913 residues: Striatin-interacting protein homolog (913 aa).

Composition is skewed to low complexity over residues 177–188 (QQQQQQQQNENE), 195–204 (TNFTTTTTTT), and 791–811 (NNNN…NNDN). Disordered stretches follow at residues 177 to 204 (QQQQ…TTTT) and 791 to 814 (NNNN…NGLT).

The protein belongs to the STRIP family.

This Dictyostelium discoideum (Social amoeba) protein is Striatin-interacting protein homolog (fam40).